We begin with the raw amino-acid sequence, 100 residues long: Small ribosomal subunit protein uS14c (100 aa).

This sequence belongs to the universal ribosomal protein uS14 family. As to quaternary structure, part of the 30S ribosomal subunit.

Its subcellular location is the plastid. The protein localises to the chloroplast. Binds 16S rRNA, required for the assembly of 30S particles. The chain is Small ribosomal subunit protein uS14c from Phaeodactylum tricornutum (strain CCAP 1055/1).